Consider the following 171-residue polypeptide: 3-hydroxydecanoyl-[acyl-carrier-protein] dehydratase (171 aa).

His-70 is an active-site residue.

It belongs to the thioester dehydratase family. FabA subfamily. As to quaternary structure, homodimer.

The protein resides in the cytoplasm. The enzyme catalyses a (3R)-hydroxyacyl-[ACP] = a (2E)-enoyl-[ACP] + H2O. The catalysed reaction is (3R)-hydroxydecanoyl-[ACP] = (2E)-decenoyl-[ACP] + H2O. It carries out the reaction (2E)-decenoyl-[ACP] = (3Z)-decenoyl-[ACP]. Its pathway is lipid metabolism; fatty acid biosynthesis. Necessary for the introduction of cis unsaturation into fatty acids. Catalyzes the dehydration of (3R)-3-hydroxydecanoyl-ACP to E-(2)-decenoyl-ACP and then its isomerization to Z-(3)-decenoyl-ACP. Can catalyze the dehydratase reaction for beta-hydroxyacyl-ACPs with saturated chain lengths up to 16:0, being most active on intermediate chain length. The chain is 3-hydroxydecanoyl-[acyl-carrier-protein] dehydratase from Pseudomonas putida (strain GB-1).